The sequence spans 322 residues: Undecaprenyl-phosphate 4-deoxy-4-formamido-L-arabinose transferase (322 aa).

The Cytoplasmic portion of the chain corresponds to 1–235; that stretch reads MFEIHPVKKV…TCLTTTPLRM (235 aa). Residues 236–256 form a helical membrane-spanning segment; the sequence is LSLLGSIIAIGGFSIAVLLVI. The Periplasmic portion of the chain corresponds to 257-269; sequence LRLTFGPQWAAEG. Residues 270–290 traverse the membrane as a helical segment; it reads VFMLFAVLFTFIGAQFIGMGL. Topologically, residues 291-322 are cytoplasmic; it reads LGEYIGRIYTDVRARPRYFVQQVIRPSSKENE.

It belongs to the glycosyltransferase 2 family.

It is found in the cell inner membrane. It catalyses the reaction UDP-4-deoxy-4-formamido-beta-L-arabinose + di-trans,octa-cis-undecaprenyl phosphate = 4-deoxy-4-formamido-alpha-L-arabinopyranosyl di-trans,octa-cis-undecaprenyl phosphate + UDP. Its pathway is glycolipid biosynthesis; 4-amino-4-deoxy-alpha-L-arabinose undecaprenyl phosphate biosynthesis; 4-amino-4-deoxy-alpha-L-arabinose undecaprenyl phosphate from UDP-4-deoxy-4-formamido-beta-L-arabinose and undecaprenyl phosphate: step 1/2. It functions in the pathway bacterial outer membrane biogenesis; lipopolysaccharide biosynthesis. In terms of biological role, catalyzes the transfer of 4-deoxy-4-formamido-L-arabinose from UDP to undecaprenyl phosphate. The modified arabinose is attached to lipid A and is required for resistance to polymyxin and cationic antimicrobial peptides. The chain is Undecaprenyl-phosphate 4-deoxy-4-formamido-L-arabinose transferase from Escherichia coli O7:K1 (strain IAI39 / ExPEC).